The sequence spans 386 residues: Interleukin-13 receptor subunit alpha-2 (386 aa).

The signal sequence occupies residues 1–21 (MAFIHLDVGFLYTLLVCTAFG). Residues 22-338 (SMLSNAEIKV…CWKGDIWKET (317 aa)) are Extracellular-facing. Fibronectin type-III domains follow at residues 33–133 (PPQD…SPQG), 138–234 (KIQD…LQNI), and 239–338 (PPDY…WKET). C64 and C112 are oxidised to a cystine. A glycan (N-linked (GlcNAc...) asparagine) is linked at N114. 2 cysteine pairs are disulfide-bonded: C144–C154 and C183–C196. Residues N214 and N298 are each glycosylated (N-linked (GlcNAc...) asparagine). A disulfide bridge connects residues C268 and C315. The short motif at 321–325 (WSEWS) is the WSXWS motif element. Residues 339-359 (LVFFLIPFAFVSIFVLVITCL) form a helical membrane-spanning segment. At 360–386 (LLYKQRALLKTIFHTKKEVFSHQDTFC) the chain is on the cytoplasmic side.

This sequence belongs to the type I cytokine receptor family. Type 5 subfamily. In terms of assembly, interacts with IL4RA. Interacts with high affinity to interleukin-13 (IL13), but not to interleukin-4 (IL4). Post-translationally, cleaved by MMP8 leading to a soluble form that is also able to interact with IL13. Expressed in kidney, placenta, liver, skeletal muscle and thymus. Expression was not seen in whole blood and heart.

The protein localises to the cell membrane. Its function is as follows. Cell surface receptor that plays a role in the regulation of IL-13-mediated responses. Functions as a decoy receptor that inhibits IL-13- and IL-4-mediated signal transduction via the JAK-STAT pathway and thereby modulates immune responses and inflammation. Serves as a functional signaling receptor for IL-13 in an alternative pathway involving AP-1 ultimately leading to the production of TGFB1. This Canis lupus familiaris (Dog) protein is Interleukin-13 receptor subunit alpha-2 (IL13RA2).